The primary structure comprises 211 residues: tRNA (guanosine(18)-2'-O)-methyltransferase (211 aa).

3 residues coordinate S-adenosyl-L-methionine: threonine 103, isoleucine 146, and leucine 155.

It belongs to the class IV-like SAM-binding methyltransferase superfamily. RNA methyltransferase TrmH family. Homodimer.

It catalyses the reaction guanosine(18) in tRNA + S-adenosyl-L-methionine = 2'-O-methylguanosine(18) in tRNA + S-adenosyl-L-homocysteine + H(+). In terms of biological role, catalyzes the 2'-O methylation of guanosine at position 18 in tRNA. Type II methylase, which methylates only a subset of tRNA species. This Aquifex aeolicus (strain VF5) protein is tRNA (guanosine(18)-2'-O)-methyltransferase.